The sequence spans 299 residues: tRNA(Met) cytidine acetate ligase (299 aa).

ATP is bound by residues 6 to 19, Gly100, Asn157, and Arg182; that span reads IAEYNPFHNGHIYM.

It belongs to the TmcAL family.

It is found in the cytoplasm. The catalysed reaction is cytidine(34) in elongator tRNA(Met) + acetate + ATP = N(4)-acetylcytidine(34) in elongator tRNA(Met) + AMP + diphosphate. Functionally, catalyzes the formation of N(4)-acetylcytidine (ac(4)C) at the wobble position of elongator tRNA(Met), using acetate and ATP as substrates. First activates an acetate ion to form acetyladenylate (Ac-AMP) and then transfers the acetyl group to tRNA to form ac(4)C34. This is tRNA(Met) cytidine acetate ligase from Mycoplasma mobile (strain ATCC 43663 / 163K / NCTC 11711) (Mesomycoplasma mobile).